We begin with the raw amino-acid sequence, 615 residues long: Threonine--tRNA ligase (615 aa).

The interval 1–132 (MRILQLHCDR…PLAEGFKVIT (132 aa)) is editing domain. A catalytic region spans residues 196–495 (PHVALMKRMG…SARGTKPELP (300 aa)). C288, H340, and H464 together coordinate Zn(2+).

It belongs to the class-II aminoacyl-tRNA synthetase family. Homodimer. It depends on Zn(2+) as a cofactor.

It localises to the cytoplasm. The catalysed reaction is tRNA(Thr) + L-threonine + ATP = L-threonyl-tRNA(Thr) + AMP + diphosphate + H(+). Its function is as follows. Catalyzes the attachment of threonine to tRNA(Thr) in a two-step reaction: L-threonine is first activated by ATP to form Thr-AMP and then transferred to the acceptor end of tRNA(Thr). Also edits incorrectly charged L-seryl-tRNA(Thr). The polypeptide is Threonine--tRNA ligase (thrS) (Cenarchaeum symbiosum (strain A)).